We begin with the raw amino-acid sequence, 430 residues long: Glutamate-1-semialdehyde 2,1-aminomutase (430 aa).

N6-(pyridoxal phosphate)lysine is present on Lys-269.

Belongs to the class-III pyridoxal-phosphate-dependent aminotransferase family. HemL subfamily. As to quaternary structure, homodimer. Pyridoxal 5'-phosphate serves as cofactor.

It is found in the cytoplasm. It carries out the reaction (S)-4-amino-5-oxopentanoate = 5-aminolevulinate. It participates in porphyrin-containing compound metabolism; protoporphyrin-IX biosynthesis; 5-aminolevulinate from L-glutamyl-tRNA(Glu): step 2/2. The protein is Glutamate-1-semialdehyde 2,1-aminomutase of Desulfitobacterium hafniense (strain DSM 10664 / DCB-2).